The following is a 1049-amino-acid chain: Dyslexia-associated protein KIAA0319-like protein (1049 aa).

The Cytoplasmic portion of the chain corresponds to 1 to 29 (MEKRLGVKPNPASWILSGYYWQTSAKWLR). The helical transmembrane segment at 30–50 (TLYLFYTCFCFSVLWLSTDAS) threads the bilayer. Positions 49–127 (ASESRCQQGK…AFRTHSSNSM (79 aa)) constitute an MANSC domain. Residues 51–932 (ESRCQQGKTQ…ESNCEWSVLY (882 aa)) lie on the Extracellular side of the membrane. Positions 234–277 (TTDLTAELPGGPKNVSAQPEIPEGLATTPSTQQVKSSEKTQIAV) are disordered. Residues Asn247, Asn395, and Asn487 are each glycosylated (N-linked (GlcNAc...) asparagine). PKD domains are found at residues 310 to 401 (VVSA…VKPE), 409 to 498 (IAIV…VNKA), 504 to 594 (VANA…VQPE), 600 to 688 (QADA…VKEE), and 694 to 785 (IAKI…VKPD). Residues 933–953 (VIIATFVIVVALGILSWTVIC) form a helical membrane-spanning segment. Residues 954–1049 (CCKRQKGKPK…KARSPREEIL (96 aa)) lie on the Cytoplasmic side of the membrane. The residue at position 974 (Thr974) is a Phosphothreonine. A phosphoserine mark is found at Ser978, Ser1009, and Ser1031. The tract at residues 1022–1049 (GKLLHGQNGSVPNGQTPLKARSPREEIL) is disordered. Residues 1028–1037 (QNGSVPNGQT) show a composition bias toward polar residues. Thr1037 bears the Phosphothreonine mark.

In terms of assembly, interacts with RTN4R. N-glycosylated.

It is found in the cytoplasmic granule membrane. The protein resides in the golgi apparatus membrane. It localises to the golgi apparatus. Its subcellular location is the trans-Golgi network membrane. The protein localises to the cell membrane. Functionally, possible role in axon guidance through interaction with RTN4R. The sequence is that of Dyslexia-associated protein KIAA0319-like protein from Pongo abelii (Sumatran orangutan).